The following is a 220-amino-acid chain: MKSVFVCTLVLALAHHAFAGVCDSNVDYNSTLITPCLGNDIIVLWPNYLNFNTYYKCVEFGKPQLMDCPPNTYFTYYFQQCTGCDNFIPAPTCEYLKQTTDVECVPLVKPTTAAPTTLKTTPSKTTPIVTTAPPSTPVPSTIVTNKPDPTTPKTTKPPKVTTTVNPSPPTGTGPATNAPSSDIPLPPIASTVNTKYPTPPGMPPTPPSFGTPPSIVQLQN.

Positions 1 to 19 are cleaved as a signal peptide; the sequence is MKSVFVCTLVLALAHHAFA. Asn-29 carries an N-linked (GlcNAc...) asparagine glycan. A Chitin-binding type-2 domain is found at 33 to 95; sequence ITPCLGNDII…NFIPAPTCEY (63 aa). An intrachain disulfide couples Cys-68 to Cys-84. Over residues 116–165 the composition is skewed to low complexity; the sequence is TTLKTTPSKTTPIVTTAPPSTPVPSTIVTNKPDPTTPKTTKPPKVTTTVN. The disordered stretch occupies residues 116-220; sequence TTLKTTPSKT…TPPSIVQLQN (105 aa). A compositionally biased stretch (pro residues) spans 197–210; the sequence is PTPPGMPPTPPSFG.

Glycosylated. As to expression, larval peritrophic membrane.

In terms of biological role, may bind oligosaccharide structures. This is Peritrophin-55 from Lucilia cuprina (Green bottle fly).